The following is a 513-amino-acid chain: ATP synthase subunit alpha (513 aa).

169-176 is a binding site for ATP; the sequence is GDRQTGKS.

It belongs to the ATPase alpha/beta chains family. As to quaternary structure, F-type ATPases have 2 components, CF(1) - the catalytic core - and CF(0) - the membrane proton channel. CF(1) has five subunits: alpha(3), beta(3), gamma(1), delta(1), epsilon(1). CF(0) has three main subunits: a(1), b(2) and c(9-12). The alpha and beta chains form an alternating ring which encloses part of the gamma chain. CF(1) is attached to CF(0) by a central stalk formed by the gamma and epsilon chains, while a peripheral stalk is formed by the delta and b chains.

The protein localises to the cell inner membrane. It catalyses the reaction ATP + H2O + 4 H(+)(in) = ADP + phosphate + 5 H(+)(out). In terms of biological role, produces ATP from ADP in the presence of a proton gradient across the membrane. The alpha chain is a regulatory subunit. This chain is ATP synthase subunit alpha, found in Sodalis glossinidius (strain morsitans).